Reading from the N-terminus, the 172-residue chain is Translation initiation factor IF-3 (172 aa).

The protein belongs to the IF-3 family. Monomer.

The protein localises to the cytoplasm. In terms of biological role, IF-3 binds to the 30S ribosomal subunit and shifts the equilibrium between 70S ribosomes and their 50S and 30S subunits in favor of the free subunits, thus enhancing the availability of 30S subunits on which protein synthesis initiation begins. The chain is Translation initiation factor IF-3 from Campylobacter curvus (strain 525.92).